Here is a 1242-residue protein sequence, read N- to C-terminus: Insulin receptor substrate 1 (1242 aa).

The residue at position 3 (Ser-3) is a Phosphoserine. Residues 3 to 137 form a mediates interaction with PHIP region; that stretch reads SPPESDGFSD…GAGGGGGSCS (135 aa). The 104-residue stretch at 12–115 folds into the PH domain; sequence DVRKVGYLRK…WYQALLQLHN (104 aa). Phosphoserine; by CK2 is present on Ser-99. Positions 160–264 constitute an IRS-type PTB domain; it reads FKEVWQVILK…EAMRAMSDEF (105 aa). Positions 262–430 are disordered; that stretch reads DEFRPRSKSQ…SDGGFISSDE (169 aa). Low complexity predominate over residues 269-281; the sequence is KSQSSSNCSNPIS. A phosphoserine; by RPS6KB1 mark is found at Ser-270 and Ser-307. Ser-312 bears the Phosphoserine; by IKKB, MAPK8 and RPS6KB1 mark. A phosphoserine mark is found at Ser-315, Ser-323, Ser-330, Ser-345, and Ser-348. A compositionally biased stretch (basic residues) spans 354-363; that stretch reads THAHRHRGSA. Composition is skewed to low complexity over residues 383–404 and 412–424; these read SPSA…GSTS and SSAS…SDGG. A Phosphoserine modification is found at Ser-419. A phosphothreonine mark is found at Thr-446 and Thr-453. Phosphotyrosine; by INSR is present on Tyr-465. A YXXM motif 1 motif is present at residues 465–468; sequence YICM. Position 527 is a phosphoserine; by RPS6KB1 (Ser-527). Positions 551 to 554 match the YXXM motif 2 motif; it reads YTEM. The segment covering 592 to 610 has biased composition (basic and acidic residues); the sequence is LERRGGHHRPDSSTLHTDD. Residues 592–616 form a disordered region; that stretch reads LERRGGHHRPDSSTLHTDDGYMPMS. Tyr-612 carries the post-translational modification Phosphotyrosine; by INSR. The YXXM motif 3 motif lies at 612-615; it reads YMPM. Phosphoserine occurs at positions 616 and 629. Tyr-632 is modified (phosphotyrosine; by INSR). Positions 632–635 match the YXXM motif 4 motif; sequence YMPM. Phosphoserine; by RPS6KB1 is present on Ser-636. Tyr-662 bears the Phosphotyrosine mark. The YXXM motif 5 signature appears at 662–665; that stretch reads YMMM. The interval 668-693 is disordered; it reads SGGCSPDIGGGPSSSSSSSNAVPSGT. Positions 732 to 735 match the YXXM motif 6 motif; the sequence is YMNM. Disordered regions lie at residues 771–900 and 918–937; these read FKHT…VNIE and SPSV…EETG. A compositionally biased stretch (basic and acidic residues) spans 776-785; it reads RPGEPEEGAR. Phosphoserine; by AMPK and SIK2 is present on Ser-794. The segment covering 801–815 has biased composition (low complexity); sequence AATADDSSSSTSSDS. Ser-892 is modified (phosphoserine). Tyr-896 carries the post-translational modification Phosphotyrosine; by INSR. The interval 896 to 898 is GRB2-binding; sequence YVN. Residues 918-928 are compositionally biased toward polar residues; sequence SPSVRCPSQLQ. Phosphotyrosine; by INSR occurs at positions 941 and 989. 3 short sequence motifs (YXXM motif) span residues 941–944, 989–992, and 1012–1015; these read YMKM, YMTM, and YADM. The disordered stretch occupies residues 1057–1146; it reads SSLLGGPQGP…DVKRHSSASF (90 aa). A compositionally biased stretch (polar residues) spans 1073 to 1085; that stretch reads TRVNLSPNRNQSA. Phosphoserine is present on Ser-1100. Ser-1101 carries the phosphoserine; by RPS6KB1 and PKC/PRKCQ modification. The segment covering 1102–1114 has biased composition (polar residues); it reads ETFSSTPSATRVG. Position 1179 is a phosphotyrosine; by INSR (Tyr-1179). Residues Lys-1186 and Lys-1189 each participate in a glycyl lysine isopeptide (Lys-Gly) (interchain with G-Cter in ubiquitin) cross-link. The tract at residues 1190 to 1242 is disordered; that stretch reads QCPQECTPEPQPPPPPPPHQPLGSGESSSTRRSSEDLSAYASISFQKQPEDRQ. Over residues 1198-1209 the composition is skewed to pro residues; that stretch reads EPQPPPPPPPHQ. A compositionally biased stretch (low complexity) spans 1210 to 1220; sequence PLGSGESSSTR. Tyr-1229 is subject to Phosphotyrosine; by INSR.

As to quaternary structure, interacts with UBTF and PIK3CA. Interacts (via phosphorylated YXXM motifs) with PIK3R1. Interacts with ROCK1 and FER. Interacts (via PH domain) with PHIP. Interacts with GRB2. Interacts with SOCS7. Interacts (via IRS-type PTB domain) with IGF1R and INSR (via the tyrosine-phosphorylated NPXY motif). Interacts with ALK. Interacts with EIF2AK2/PKR. Interacts with GKAP1. Interacts with DGKZ in the absence of insulin; insulin stimulation decreases this interaction. Found in a ternary complex with DGKZ and PIP5K1A in the absence of insulin stimulation. Interacts with SQSTM1; the interaction is disrupted by the presence of tensin TNS2. Interacts with NCK1 (via SH2 domain). Interacts with NCK2 (via SH3 domain). Interacts with SH2B1; this interaction enhances leptin-induced activation of the PI3-kinase pathway. Interacts with DVL2; this interaction promotes the Wnt/beta-catenin signaling pathway. In terms of processing, serine phosphorylation of IRS1 is a mechanism for insulin resistance. Ser-307, Ser-312, Ser-315, and Ser-323 phosphorylations inhibit insulin action through disruption of IRS1 interaction with the insulin receptor INSR. Phosphorylation of Tyr-896 is required for GRB2-binding. Phosphorylated by ALK. Phosphorylated at Ser-270, Ser-307, Ser-636 and Ser-1101 by RPS6KB1; phosphorylation induces accelerated degradation of IRS1. Phosphorylated on tyrosine residues in response to insulin. In skeletal muscles, dephosphorylated on Tyr-612 by TNS2 under anabolic conditions; dephosphorylation results in the proteasomal degradation of IRS1. Post-translationally, ubiquitinated by the Cul7-RING(FBXW8) complex in a mTOR-dependent manner, leading to its degradation: the Cul7-RING(FBXW8) complex recognizes and binds IRS1 previously phosphorylated by S6 kinase (RPS6KB1 or RPS6KB2). Ubiquitinated by TRAF4 through 'Lys-29' linkage; this ubiquitination regulates the interaction of IRS1 with IGFR and IRS1 tyrosine phosphorylation upon IGF1 stimulation. S-nitrosylation at by BLVRB inhibits its activity.

It is found in the cytoplasm. The protein localises to the nucleus. Its function is as follows. Signaling adapter protein that participates in the signal transduction from two prominent receptor tyrosine kinases, insulin receptor/INSR and insulin-like growth factor I receptor/IGF1R. Plays therefore an important role in development, growth, glucose homeostasis as well as lipid metabolism. Upon phosphorylation by the insulin receptor, functions as a signaling scaffold that propagates insulin action through binding to SH2 domain-containing proteins including the p85 regulatory subunit of PI3K, NCK1, NCK2, GRB2 or SHP2. Recruitment of GRB2 leads to the activation of the guanine nucleotide exchange factor SOS1 which in turn triggers the Ras/Raf/MEK/MAPK signaling cascade. Activation of the PI3K/AKT pathway is responsible for most of insulin metabolic effects in the cell, and the Ras/Raf/MEK/MAPK is involved in the regulation of gene expression and in cooperation with the PI3K pathway regulates cell growth and differentiation. Acts a positive regulator of the Wnt/beta-catenin signaling pathway through suppression of DVL2 autophagy-mediated degradation leading to cell proliferation. This is Insulin receptor substrate 1 (IRS1) from Homo sapiens (Human).